A 226-amino-acid chain; its full sequence is Deoxyribose-phosphate aldolase (226 aa).

Residue Asp96 is the Proton donor/acceptor of the active site. Lys157 serves as the catalytic Schiff-base intermediate with acetaldehyde. Catalysis depends on Lys185, which acts as the Proton donor/acceptor.

This sequence belongs to the DeoC/FbaB aldolase family. DeoC type 1 subfamily.

It is found in the cytoplasm. The catalysed reaction is 2-deoxy-D-ribose 5-phosphate = D-glyceraldehyde 3-phosphate + acetaldehyde. Its pathway is carbohydrate degradation; 2-deoxy-D-ribose 1-phosphate degradation; D-glyceraldehyde 3-phosphate and acetaldehyde from 2-deoxy-alpha-D-ribose 1-phosphate: step 2/2. In terms of biological role, catalyzes a reversible aldol reaction between acetaldehyde and D-glyceraldehyde 3-phosphate to generate 2-deoxy-D-ribose 5-phosphate. The chain is Deoxyribose-phosphate aldolase from Trichormus variabilis (strain ATCC 29413 / PCC 7937) (Anabaena variabilis).